We begin with the raw amino-acid sequence, 307 residues long: Peroxisomal membrane protein PMP34 (307 aa).

Residues 1–9 (MASVLSYES) are Cytoplasmic-facing. The interval 1–147 (MASVLSYESL…NEDIIPTNYK (147 aa)) is necessary for targeting to peroxisomes and interaction with PEX19. Solcar repeat units follow at residues 7 to 92 (YESL…LKAV), 99 to 192 (SSTG…LKRQ), and 200 to 294 (LSSL…LTAA). Residues 10 to 30 (LVHAVAGAVGSVTAMTVFFPL) form a helical membrane-spanning segment. The Lumenal segment spans residues 31–66 (DTARLRLQVDEKRKSKTTHAVLLEIIKEEGLLAPYR). A helical membrane pass occupies residues 67–87 (GWFPVISSLCCSNFVYFYTFN). The Cytoplasmic segment spans residues 88 to 104 (SLKAVWVKGQRSSTGKD). The helical transmembrane segment at 105–125 (LVVGFVAGVVNVLLTTPLWVV) threads the bilayer. Over 126–160 (NTRLKLQGAKFRNEDIIPTNYKGIIDAFHQIIRDE) the chain is Lumenal. A helical transmembrane segment spans residues 161–181 (GILALWNGTFPSLLLVFNPAI). The Cytoplasmic portion of the chain corresponds to 182 to 202 (QFMFYEGLKRQLLKKRMKLSS). A Peroxisome localization signal motif is present at residues 190–199 (KRQLLKKRMK). Residues 203–223 (LDVFIIGAIAKAIATTVTYPM) traverse the membrane as a helical segment. Topologically, residues 224-280 (QTVQSILRFGRHRLNPENRTLGSLRNVLSLLHQRVKRFGIMGLYKGLEAKLLQTVLT) are lumenal. The necessary for targeting to peroxisomes and interaction with PEX19 stretch occupies residues 244–307 (LGSLRNVLSL…VMGLKSTHKH (64 aa)). The helical transmembrane segment at 281-301 (AALMFLVYEKLTAATFTVMGL) threads the bilayer. At 302–307 (KSTHKH) the chain is on the cytoplasmic side.

It belongs to the mitochondrial carrier (TC 2.A.29) family. As to quaternary structure, interacts (via N- and C-terminus peroxisomal targeting regions) with PEX19; the interaction occurs with the newly synthesized SLC25A17 in the cytosol. As to expression, expressed in liver, kidney, heart, spleen, muscle and lung.

The protein localises to the cytoplasm. It is found in the peroxisome membrane. It carries out the reaction AMP(out) + CoA(in) = AMP(in) + CoA(out). The catalysed reaction is 3'-dephospho-CoA(in) + AMP(out) = 3'-dephospho-CoA(out) + AMP(in). It catalyses the reaction acetyl-CoA(in) + AMP(out) = acetyl-CoA(out) + AMP(in). The enzyme catalyses AMP(in) + NAD(+)(out) = AMP(out) + NAD(+)(in). It carries out the reaction FAD(in) + AMP(out) = FAD(out) + AMP(in). The catalysed reaction is FMN(in) + AMP(out) = FMN(out) + AMP(in). It catalyses the reaction AMP(in) + ADP(out) = AMP(out) + ADP(in). The enzyme catalyses adenosine 3',5'-bisphosphate(in) + AMP(out) = adenosine 3',5'-bisphosphate(out) + AMP(in). It carries out the reaction FAD(in) + CoA(out) = FAD(out) + CoA(in). The catalysed reaction is FAD(in) + adenosine 3',5'-bisphosphate(out) = FAD(out) + adenosine 3',5'-bisphosphate(in). It catalyses the reaction FMN(in) + CoA(out) = FMN(out) + CoA(in). The enzyme catalyses FMN(in) + adenosine 3',5'-bisphosphate(out) = FMN(out) + adenosine 3',5'-bisphosphate(in). It carries out the reaction FAD(out) + NAD(+)(in) = FAD(in) + NAD(+)(out). The catalysed reaction is FMN(out) + NAD(+)(in) = FMN(in) + NAD(+)(out). It catalyses the reaction NAD(+)(in) + CoA(out) = NAD(+)(out) + CoA(in). The enzyme catalyses adenosine 3',5'-bisphosphate(out) + NAD(+)(in) = adenosine 3',5'-bisphosphate(in) + NAD(+)(out). It carries out the reaction FMN(out) + ADP(in) = FMN(in) + ADP(out). The catalysed reaction is FAD(out) + ADP(in) = FAD(in) + ADP(out). It catalyses the reaction ADP(out) + CoA(in) = ADP(in) + CoA(out). The enzyme catalyses adenosine 3',5'-bisphosphate(in) + ADP(out) = adenosine 3',5'-bisphosphate(out) + ADP(in). Its function is as follows. Peroxisomal transporter for multiple cofactors like coenzyme A (CoA), flavin adenine dinucleotide (FAD), flavin mononucleotide (FMN) and nucleotide adenosine monophosphate (AMP), and to a lesser extent for nicotinamide adenine dinucleotide (NAD(+)), adenosine diphosphate (ADP) and adenosine 3',5'-diphosphate (PAP). May catalyze the transport of free CoA, FAD and NAD(+) from the cytosol into the peroxisomal matrix by a counter-exchange mechanism. This chain is Peroxisomal membrane protein PMP34 (Slc25a17), found in Mus musculus (Mouse).